The sequence spans 640 residues: tRNA uridine 5-carboxymethylaminomethyl modification enzyme MnmG (640 aa).

9-14 (GGGHAG) serves as a coordination point for FAD. 289 to 303 (GPRYCPSIEDKINKF) provides a ligand contact to NAD(+).

This sequence belongs to the MnmG family. Homodimer. Heterotetramer of two MnmE and two MnmG subunits. The cofactor is FAD.

Its subcellular location is the cytoplasm. Its function is as follows. NAD-binding protein involved in the addition of a carboxymethylaminomethyl (cmnm) group at the wobble position (U34) of certain tRNAs, forming tRNA-cmnm(5)s(2)U34. The protein is tRNA uridine 5-carboxymethylaminomethyl modification enzyme MnmG of Campylobacter hominis (strain ATCC BAA-381 / DSM 21671 / CCUG 45161 / LMG 19568 / NCTC 13146 / CH001A).